A 392-amino-acid polypeptide reads, in one-letter code: Heat-inducible transcription repressor HrcA (392 aa).

This sequence belongs to the HrcA family.

In terms of biological role, negative regulator of class I heat shock genes (grpE-dnaK-dnaJ and groELS operons). Prevents heat-shock induction of these operons. This is Heat-inducible transcription repressor HrcA from Chlamydia muridarum (strain MoPn / Nigg).